Consider the following 110-residue polypeptide: ATP-dependent Clp protease adapter protein ClpS (110 aa).

This sequence belongs to the ClpS family. Binds to the N-terminal domain of the chaperone ClpA.

In terms of biological role, involved in the modulation of the specificity of the ClpAP-mediated ATP-dependent protein degradation. The polypeptide is ATP-dependent Clp protease adapter protein ClpS (Bartonella henselae (strain ATCC 49882 / DSM 28221 / CCUG 30454 / Houston 1) (Rochalimaea henselae)).